A 195-amino-acid chain; its full sequence is Probable GTP-binding protein EngB (195 aa).

An EngB-type G domain is found at 22–195; it reads GRPEVALAGR…WAALLPFVAS (174 aa). GTP contacts are provided by residues 30–37, 57–61, 75–78, 142–145, and 174–176; these read GRSNVGKS, GKTQT, DVPG, TKAD, and FSA. Positions 37 and 59 each coordinate Mg(2+).

It belongs to the TRAFAC class TrmE-Era-EngA-EngB-Septin-like GTPase superfamily. EngB GTPase family. The cofactor is Mg(2+).

Functionally, necessary for normal cell division and for the maintenance of normal septation. In Geobacillus kaustophilus (strain HTA426), this protein is Probable GTP-binding protein EngB.